Consider the following 33-residue polypeptide: Dermaseptin-4 (33 aa).

A Leucine amide modification is found at leucine 33.

As to expression, expressed by the skin glands.

It is found in the secreted. Its function is as follows. Has antiparasitic activity against trypomastigote form of T.cruzi (IC(50)=0.25 uM) in vitro but not against L.infantum. Probably acts by permeabilizing cell membranes. In vitro, shows no cytotoxicity against macrophages. Has antibacterial activity. In Pithecopus nordestinus (Northeastern Brazilian leaf frog), this protein is Dermaseptin-4.